The following is a 502-amino-acid chain: Smr domain-containing protein C1235.03 (502 aa).

The segment at leucine 150–glutamate 184 is disordered. Over residues histidine 157–asparagine 171 the composition is skewed to basic residues. Residues serine 411–isoleucine 459 enclose the Smr domain.

The protein resides in the nucleus. It is found in the nucleolus. The chain is Smr domain-containing protein C1235.03 from Schizosaccharomyces pombe (strain 972 / ATCC 24843) (Fission yeast).